The primary structure comprises 62 residues: Rhodotorucin-A peptides type 1 (62 aa).

The propeptide occupies 1 to 3; it reads MVA. A lipid anchor (S-farnesyl cysteine) is attached at Cys14. The propeptide occupies 15-18; sequence TVSK. Cys29 carries the S-farnesyl cysteine lipid modification. A propeptide spanning residues 30 to 33 is cleaved from the precursor; sequence TVSK. Cys44 carries the S-farnesyl cysteine lipid modification. Positions 45–48 are excised as a propeptide; sequence TVSK. Cys59 is lipidated: S-farnesyl cysteine. The propeptide occupies 60 to 62; it reads TVA.

It localises to the cell membrane. Its function is as follows. Rhodotorucin-A is a mating pheromone in cells of mating type A of Rhodosporidium toruloides. This chain is Rhodotorucin-A peptides type 1 (RHA1), found in Rhodotorula toruloides (Yeast).